Reading from the N-terminus, the 327-residue chain is Undecaprenyl-phosphate 4-deoxy-4-formamido-L-arabinose transferase (327 aa).

The next 2 membrane-spanning stretches (helical) occupy residues 233–253 (ILSL…LLLI) and 268–288 (VFTL…GMGL).

This sequence belongs to the glycosyltransferase 2 family.

The protein localises to the cell inner membrane. The enzyme catalyses UDP-4-deoxy-4-formamido-beta-L-arabinose + di-trans,octa-cis-undecaprenyl phosphate = 4-deoxy-4-formamido-alpha-L-arabinopyranosyl di-trans,octa-cis-undecaprenyl phosphate + UDP. Its pathway is glycolipid biosynthesis; 4-amino-4-deoxy-alpha-L-arabinose undecaprenyl phosphate biosynthesis; 4-amino-4-deoxy-alpha-L-arabinose undecaprenyl phosphate from UDP-4-deoxy-4-formamido-beta-L-arabinose and undecaprenyl phosphate: step 1/2. It functions in the pathway bacterial outer membrane biogenesis; lipopolysaccharide biosynthesis. Functionally, catalyzes the transfer of 4-deoxy-4-formamido-L-arabinose from UDP to undecaprenyl phosphate. The modified arabinose is attached to lipid A and is required for resistance to polymyxin and cationic antimicrobial peptides. The chain is Undecaprenyl-phosphate 4-deoxy-4-formamido-L-arabinose transferase from Pectobacterium carotovorum subsp. carotovorum (strain PC1).